Here is a 341-residue protein sequence, read N- to C-terminus: HTH-type transcriptional repressor PurR (341 aa).

One can recognise an HTH lacI-type domain in the interval 2-56; the sequence is ATIKDVAKRANVSTTTVSHVINKTRFVAEETRNAVWAAIKELHYSPSAVARSLKV. The segment at residues 4-23 is a DNA-binding region (H-T-H motif); sequence IKDVAKRANVSTTTVSHVIN. Residues 48–56 mediate DNA binding; the sequence is SAVARSLKV. Hypoxanthine-binding residues include Tyr73, Arg190, Thr192, Phe221, and Asp275.

In terms of assembly, homodimer.

Its pathway is purine metabolism; purine nucleotide biosynthesis [regulation]. In terms of biological role, is the main repressor of the genes involved in the de novo synthesis of purine nucleotides, regulating purB, purC, purEK, purF, purHD, purL, purMN and guaBA expression. PurR is allosterically activated to bind its cognate DNA by binding the purine corepressors, hypoxanthine or guanine, thereby effecting transcription repression. The chain is HTH-type transcriptional repressor PurR from Shigella dysenteriae serotype 1 (strain Sd197).